Reading from the N-terminus, the 458-residue chain is Glycogen synthase (458 aa).

Lys15 provides a ligand contact to ADP-alpha-D-glucose.

This sequence belongs to the glycosyltransferase 1 family. Bacterial/plant glycogen synthase subfamily.

It carries out the reaction [(1-&gt;4)-alpha-D-glucosyl](n) + ADP-alpha-D-glucose = [(1-&gt;4)-alpha-D-glucosyl](n+1) + ADP + H(+). Its pathway is glycan biosynthesis; glycogen biosynthesis. In terms of biological role, synthesizes alpha-1,4-glucan chains using ADP-glucose. This Gloeobacter violaceus (strain ATCC 29082 / PCC 7421) protein is Glycogen synthase.